Here is a 659-residue protein sequence, read N- to C-terminus: Threonine--tRNA ligase (659 aa).

The region spanning 1–61 (MIDLIFPDGS…TPDLLGGGNR (61 aa)) is the TGS domain. The interval 249–541 (DHRKLGKTMD…LLENYAGHLP (293 aa)) is catalytic. C341, H392, and H518 together coordinate Zn(2+). The tract at residues 637–659 (EEATPPDLARDRAVAAPAELAQA) is disordered.

This sequence belongs to the class-II aminoacyl-tRNA synthetase family. As to quaternary structure, homodimer. It depends on Zn(2+) as a cofactor.

The protein resides in the cytoplasm. It carries out the reaction tRNA(Thr) + L-threonine + ATP = L-threonyl-tRNA(Thr) + AMP + diphosphate + H(+). Functionally, catalyzes the attachment of threonine to tRNA(Thr) in a two-step reaction: L-threonine is first activated by ATP to form Thr-AMP and then transferred to the acceptor end of tRNA(Thr). Also edits incorrectly charged L-seryl-tRNA(Thr). The polypeptide is Threonine--tRNA ligase (Caulobacter sp. (strain K31)).